A 151-amino-acid polypeptide reads, in one-letter code: Phosphopantetheine adenylyltransferase (151 aa).

Substrate is bound at residue T9. ATP-binding positions include 9-10 (TF) and H17. Residues K41, T73, and R87 each contribute to the substrate site. ATP is bound by residues 88 to 90 (GIR), E98, and 122 to 128 (LTCVSST).

This sequence belongs to the bacterial CoaD family. Homohexamer. Mg(2+) serves as cofactor.

It localises to the cytoplasm. It carries out the reaction (R)-4'-phosphopantetheine + ATP + H(+) = 3'-dephospho-CoA + diphosphate. The protein operates within cofactor biosynthesis; coenzyme A biosynthesis; CoA from (R)-pantothenate: step 4/5. Its function is as follows. Reversibly transfers an adenylyl group from ATP to 4'-phosphopantetheine, yielding dephospho-CoA (dPCoA) and pyrophosphate. This Bacteroides thetaiotaomicron (strain ATCC 29148 / DSM 2079 / JCM 5827 / CCUG 10774 / NCTC 10582 / VPI-5482 / E50) protein is Phosphopantetheine adenylyltransferase.